The sequence spans 107 residues: MTKSELVAQLASRFPQLVLKDADFAVKTMLDAMSDALAKGHRIEIRGFGSFGLNRRPARVGRNPKSGEKVQVPEKFVPHFKPGKELRERVDGRAGEPLKADDPDDDR.

Positions 76–107 are disordered; sequence FVPHFKPGKELRERVDGRAGEPLKADDPDDDR. The segment covering 82–101 has biased composition (basic and acidic residues); sequence PGKELRERVDGRAGEPLKAD.

The protein belongs to the bacterial histone-like protein family. As to quaternary structure, heterodimer of an alpha and a beta chain.

Its function is as follows. This protein is one of the two subunits of integration host factor, a specific DNA-binding protein that functions in genetic recombination as well as in transcriptional and translational control. The polypeptide is Integration host factor subunit beta (Burkholderia cenocepacia (strain HI2424)).